A 364-amino-acid polypeptide reads, in one-letter code: Thebaine 6-O-demethylase (364 aa).

The 101-residue stretch at 214-314 (GTQAMRMNYY…RLSIATFHDP (101 aa)) folds into the Fe2OG dioxygenase domain. Tyrosine 223 contributes to the 2-oxoglutarate binding site. Fe cation contacts are provided by histidine 238, aspartate 240, and histidine 295. 2-oxoglutarate-binding residues include arginine 305 and serine 307.

It belongs to the iron/ascorbate-dependent oxidoreductase family. Requires L-ascorbate as cofactor. Fe cation serves as cofactor. Mainly expressed in stems and leaves and, to a lower extent, in capsules and roots.

The enzyme catalyses thebaine + 2-oxoglutarate + O2 = neopinone + formaldehyde + succinate + CO2. It carries out the reaction oripavine + 2-oxoglutarate + O2 = neomorphinone + formaldehyde + succinate + CO2. It catalyses the reaction (S)-canadine + S-adenosyl-L-methionine = (S)-cis-N-methylcanadine + S-adenosyl-L-homocysteine. The catalysed reaction is thebaine + 2-oxoglutarate + O2 = 6-O-demethylthebaine + formaldehyde + succinate + CO2 + H(+). Its pathway is alkaloid biosynthesis; morphine biosynthesis. Moderate substrate inhibition. Not inhibited in vitro by acylcyclohexanediones. Non-heme dioxygenase involved in biosynthesis of morphinan-type benzylisoquinoline and opiate alkaloids natural products. Mediates the conversion of thebaine to neopinone. Also catalyzes, with lower efficiency, the 6-O-demethylation of oripavine to neomorphinone, which is converted spontaneously to morphinone. Supports dealkylation reactions such as O,O-demethylenation in the metabolism of protopine, benzo[c]phenanthridine, and rhoeadine alkaloids; cleaves a methylenedioxy bridge leaving two hydroxyl groups. Catalyzes the O-demethylation of methylenedioxy bridges on protopine alkaloids such as allocryptopine. No activity with (S)-reticuline, salutaridine, papaverine, (S)-corytuberine, (S)-scoulerine, pavine, noscapine or codeine. This is Thebaine 6-O-demethylase from Papaver somniferum (Opium poppy).